The sequence spans 395 residues: Flagellin A (395 aa).

The protein belongs to the bacterial flagellin family.

It localises to the secreted. It is found in the bacterial flagellum. Its function is as follows. Flagellin is the subunit protein which polymerizes to form the filaments of bacterial flagella. Homomer of FlaA is able to form a functional filament. The protein is Flagellin A (flaA) of Rhizobium meliloti (Ensifer meliloti).